A 174-amino-acid polypeptide reads, in one-letter code: Shikimate kinase 2 (174 aa).

G12–T17 provides a ligand contact to ATP. The Mg(2+) site is built by T16 and D32. Positions 34, 58, and 79 each coordinate substrate. Residues A112–K126 are LID domain. R120 is a binding site for ATP. R139 is a substrate binding site. An ATP-binding site is contributed by Q155.

It belongs to the shikimate kinase family. AroL subfamily. Monomer. Mg(2+) serves as cofactor.

It is found in the cytoplasm. It catalyses the reaction shikimate + ATP = 3-phosphoshikimate + ADP + H(+). The protein operates within metabolic intermediate biosynthesis; chorismate biosynthesis; chorismate from D-erythrose 4-phosphate and phosphoenolpyruvate: step 5/7. Its function is as follows. Catalyzes the specific phosphorylation of the 3-hydroxyl group of shikimic acid using ATP as a cosubstrate. In Yersinia enterocolitica serotype O:8 / biotype 1B (strain NCTC 13174 / 8081), this protein is Shikimate kinase 2.